The sequence spans 132 residues: Transcription antitermination protein NusB (132 aa).

Belongs to the NusB family.

In terms of biological role, involved in transcription antitermination. Required for transcription of ribosomal RNA (rRNA) genes. Binds specifically to the boxA antiterminator sequence of the ribosomal RNA (rrn) operons. This chain is Transcription antitermination protein NusB, found in Lachnoclostridium phytofermentans (strain ATCC 700394 / DSM 18823 / ISDg) (Clostridium phytofermentans).